The sequence spans 294 residues: UDP-3-O-acyl-N-acetylglucosamine deacetylase (294 aa).

The Zn(2+) site is built by histidine 75, histidine 232, and aspartate 236. Histidine 259 acts as the Proton donor in catalysis.

This sequence belongs to the LpxC family. Requires Zn(2+) as cofactor.

The catalysed reaction is a UDP-3-O-[(3R)-3-hydroxyacyl]-N-acetyl-alpha-D-glucosamine + H2O = a UDP-3-O-[(3R)-3-hydroxyacyl]-alpha-D-glucosamine + acetate. The protein operates within glycolipid biosynthesis; lipid IV(A) biosynthesis; lipid IV(A) from (3R)-3-hydroxytetradecanoyl-[acyl-carrier-protein] and UDP-N-acetyl-alpha-D-glucosamine: step 2/6. Catalyzes the hydrolysis of UDP-3-O-myristoyl-N-acetylglucosamine to form UDP-3-O-myristoylglucosamine and acetate, the committed step in lipid A biosynthesis. In Campylobacter lari (strain RM2100 / D67 / ATCC BAA-1060), this protein is UDP-3-O-acyl-N-acetylglucosamine deacetylase.